Reading from the N-terminus, the 50-residue chain is Insulin-1 (50 aa).

Intrachain disulfides connect C7/C36, C19/C49, and C35/C40.

Belongs to the insulin family. As to quaternary structure, heterodimer of a B chain and an A chain linked by two disulfide bonds.

The protein localises to the secreted. In terms of biological role, insulin decreases blood glucose concentration. It increases cell permeability to monosaccharides, amino acids and fatty acids. It accelerates glycolysis, the pentose phosphate cycle, and glycogen synthesis in liver. The sequence is that of Insulin-1 from Katsuwonus pelamis (Skipjack tuna).